A 168-amino-acid chain; its full sequence is CS3 fimbrial subunit A (168 aa).

The signal sequence occupies residues Met-1–Ala-22.

A longer minor form, starting at amino acid 15, has been detected by amino acid sequencing. This is probably due to alternative processing of the signal peptide.

It localises to the fimbrium. Fimbriae (also called pili), polar filaments radiating from the surface of the bacterium to a length of 0.5-1.5 micrometers and numbering 100-300 per cell, enable bacteria to colonize the epithelium of specific host organs. This is CS3 fimbrial subunit A from Escherichia coli.